The primary structure comprises 635 residues: 4-hydroxy-3-methylbut-2-enyl diphosphate reductase (635 aa).

Residues 1–279 form a 4-hydroxy-3-methylbut-2-enyl diphosphate reductase region; the sequence is MSIILAKKSG…KEAIFKMSNK (279 aa). Position 12 (Cys-12) interacts with [4Fe-4S] cluster. Residues His-42 and His-77 each contribute to the (2E)-4-hydroxy-3-methylbut-2-enyl diphosphate site. Residues His-42 and His-77 each contribute to the dimethylallyl diphosphate site. Positions 42 and 77 each coordinate isopentenyl diphosphate. Cys-99 contacts [4Fe-4S] cluster. Residue His-127 coordinates (2E)-4-hydroxy-3-methylbut-2-enyl diphosphate. His-127 serves as a coordination point for dimethylallyl diphosphate. Residue His-127 participates in isopentenyl diphosphate binding. The active-site Proton donor is the Glu-129. Thr-163 is a (2E)-4-hydroxy-3-methylbut-2-enyl diphosphate binding site. Cys-191 is a [4Fe-4S] cluster binding site. Positions 219, 220, 221, and 263 each coordinate (2E)-4-hydroxy-3-methylbut-2-enyl diphosphate. The dimethylallyl diphosphate site is built by Ser-219, Ser-220, Asn-221, and Ser-263. Ser-219, Ser-220, Asn-221, and Ser-263 together coordinate isopentenyl diphosphate. S1 motif domains lie at 298–373, 380–455, 476–544, and 561–630; these read GQEV…LNRE, KEAF…ASRR, DTIK…LSIK, and GNIV…LSIK.

In the N-terminal section; belongs to the IspH family. [4Fe-4S] cluster is required as a cofactor.

The enzyme catalyses isopentenyl diphosphate + 2 oxidized [2Fe-2S]-[ferredoxin] + H2O = (2E)-4-hydroxy-3-methylbut-2-enyl diphosphate + 2 reduced [2Fe-2S]-[ferredoxin] + 2 H(+). It catalyses the reaction dimethylallyl diphosphate + 2 oxidized [2Fe-2S]-[ferredoxin] + H2O = (2E)-4-hydroxy-3-methylbut-2-enyl diphosphate + 2 reduced [2Fe-2S]-[ferredoxin] + 2 H(+). It functions in the pathway isoprenoid biosynthesis; dimethylallyl diphosphate biosynthesis; dimethylallyl diphosphate from (2E)-4-hydroxy-3-methylbutenyl diphosphate: step 1/1. The protein operates within isoprenoid biosynthesis; isopentenyl diphosphate biosynthesis via DXP pathway; isopentenyl diphosphate from 1-deoxy-D-xylulose 5-phosphate: step 6/6. In terms of biological role, catalyzes the conversion of 1-hydroxy-2-methyl-2-(E)-butenyl 4-diphosphate (HMBPP) into a mixture of isopentenyl diphosphate (IPP) and dimethylallyl diphosphate (DMAPP). Acts in the terminal step of the DOXP/MEP pathway for isoprenoid precursor biosynthesis. This chain is 4-hydroxy-3-methylbut-2-enyl diphosphate reductase, found in Clostridium tetani (strain Massachusetts / E88).